Here is a 170-residue protein sequence, read N- to C-terminus: Probable calcium-binding protein CML29 (170 aa).

EF-hand domains follow at residues 27–62, 63–98, and 138–170; these read SYISSLVEAFQAFDSDNDGLVTAPELRGLLASLGLD, KPEHEVRDMLARADADRDGKLSVEELLDVMNAGQLG, and ASVEDCMEIIACMDGDGDGAISVEEFRLMAQLL. Ca(2+) contacts are provided by Asp-40, Asp-42, Asp-44, Glu-51, Asp-76, Asp-78, Asp-80, Lys-82, Glu-87, Asp-151, Asp-153, Asp-155, and Glu-162.

Functionally, potential calcium sensor. The sequence is that of Probable calcium-binding protein CML29 (CML29) from Oryza sativa subsp. japonica (Rice).